A 571-amino-acid polypeptide reads, in one-letter code: Cilia- and flagella-associated protein 52 (571 aa).

WD repeat units lie at residues 62–106, 109–150, 156–195, 288–327, 330–364, 366–405, 410–449, 451–490, 494–533, and 536–571; these read GHGN…LLAR, LHKG…AICG, LNVG…RKIW, QSQG…ETLI, CHFE…TSSN, AHRI…QKLE, EHKS…RNQM, LANT…VIRE, SLSG…VTHV, and GHSG…PYTS.

It belongs to the CFAP52 family. In terms of assembly, microtubule inner protein component of sperm flagellar doublet microtubules. Interacts with BRCA2. Interacts with the CCT chaperonin complex. Interacts with HSP70. Interacts with AK8. Interacts with CFAP45. Interacts with DNAI1. Interacts with IQDC.

It localises to the cytoplasm. Its subcellular location is the cytoskeleton. The protein resides in the cilium axoneme. The protein localises to the flagellum axoneme. In terms of biological role, microtubule inner protein (MIP) part of the dynein-decorated doublet microtubules (DMTs) in cilia axoneme. Important for proper ciliary and flagellar beating. May act in cooperation with CFAP45 and axonemal dynein subunit DNAH11. May play a role in cell growth and/or survival. The polypeptide is Cilia- and flagella-associated protein 52 (Macaca fascicularis (Crab-eating macaque)).